A 438-amino-acid polypeptide reads, in one-letter code: Alpha-methylserine aldolase (438 aa).

An N6-(pyridoxal phosphate)lysine modification is found at K252.

Belongs to the SHMT family. Alpha-methylserine aldolase subfamily. In terms of assembly, homodimer. Requires pyridoxal 5'-phosphate as cofactor.

It catalyses the reaction 2-methyl-L-serine = formaldehyde + L-alanine. In the alpha-methyl-L-serine synthesis reaction, activity is inhibited by an excess amount of formaldehyde (at a concentration greater than 10 mM). Functionally, catalyzes the reversible interconversion of alpha-methyl-L-serine to L-alanine and formaldehyde. Cannot use alpha-methyl-D-serine, L-serine or D-serine. Cannot use D-alanine instead of L-alanine as the substrate for alpha-methyl-L-serine synthesis. Does not require tetrahydrofolate (THF) for activity. In Ralstonia sp, this protein is Alpha-methylserine aldolase.